Reading from the N-terminus, the 506-residue chain is Squalene monooxygenase 1,1 (506 aa).

Transmembrane regions (helical) follow at residues 3–23 (LAFPHVCLWTLLAFVLTWTVF) and 47–67 (DADVIIVGAGVGGSALAYALA). FAD is bound by residues 57-58 (VG), 77-78 (ER), R85, F90, R157, V173, D336, and M349. Residues 447 to 467 (LIFHLCGITLSSIGQLLSPFP) traverse the membrane as a helical segment.

This sequence belongs to the squalene monooxygenase family. Requires FAD as cofactor.

It localises to the membrane. The enzyme catalyses squalene + reduced [NADPH--hemoprotein reductase] + O2 = (S)-2,3-epoxysqualene + oxidized [NADPH--hemoprotein reductase] + H2O + H(+). It functions in the pathway terpene metabolism; lanosterol biosynthesis; lanosterol from farnesyl diphosphate: step 2/3. Its function is as follows. Catalyzes the stereospecific oxidation of squalene to (S)-2,3-epoxysqualene, and is considered to be a rate-limiting enzyme in steroid biosynthesis. In Brassica napus (Rape), this protein is Squalene monooxygenase 1,1 (SQP1,1).